An 83-amino-acid polypeptide reads, in one-letter code: Apolipoprotein C-I, basic form (83 aa).

Residues 1–26 (MRLFLSLPVLVVVLSMVLEGPAPAQG) form the signal peptide.

The protein belongs to the apolipoprotein C1 family.

Its subcellular location is the secreted. Functionally, inhibitor of lipoprotein binding to the low density lipoprotein (LDL) receptor, LDL receptor-related protein, and very low density lipoprotein (VLDL) receptor. Associates with high density lipoproteins (HDL) and the triacylglycerol-rich lipoproteins in the plasma and makes up about 10% of the protein of the VLDL and 2% of that of HDL. Appears to interfere directly with fatty acid uptake and is also the major plasma inhibitor of cholesteryl ester transfer protein (CETP). Binds free fatty acids and reduces their intracellular esterification. Modulates the interaction of APOE with beta-migrating VLDL and inhibits binding of beta-VLDL to the LDL receptor-related protein. The polypeptide is Apolipoprotein C-I, basic form (APOC1B) (Cercocebus atys (Sooty mangabey)).